The primary structure comprises 97 residues: Alpha-latrotoxin associated low molecular weight protein 2 (97 aa).

An N-terminal signal peptide occupies residues 1-19; the sequence is MFKLICIVFIATILSITSA. Cystine bridges form between Cys36–Cys72, Cys52–Cys68, and Cys55–Cys81.

The protein belongs to the arthropod CHH/MIH/GIH/VIH hormone family. As to expression, expressed by the venom gland.

The protein localises to the secreted. May increase the toxicity of alpha-latrotoxin and/or other venom components. Is non-toxic to mice and to the cockroach Periplaneta americana. The protein is Alpha-latrotoxin associated low molecular weight protein 2 of Steatoda grossa (False black widow).